The sequence spans 340 residues: Nod factor export ATP-binding protein I (340 aa).

Residues 1 to 24 (MLKRKLGPEDLRRLETPAIERESH) are compositionally biased toward basic and acidic residues. Residues 1–34 (MLKRKLGPEDLRRLETPAIERESHGQTSAKSSVP) are disordered. The segment covering 25–34 (GQTSAKSSVP) has biased composition (polar residues). Residues 42–272 (VDFAGVTKSY…HIGCQVMEIY (231 aa)) enclose the ABC transporter domain. 74-81 (GPNGAGKS) provides a ligand contact to ATP.

It belongs to the ABC transporter superfamily. Lipooligosaccharide exporter (TC 3.A.1.102) family. The complex is composed of two ATP-binding proteins (NodI) and two transmembrane proteins (NodJ).

The protein resides in the cell inner membrane. Its function is as follows. Part of the ABC transporter complex NodIJ involved in the export of the nodulation factors (Nod factors), the bacterial signal molecules that induce symbiosis and subsequent nodulation induction. Nod factors are LCO (lipo-chitin oligosaccharide), a modified beta-1,4-linked N-acetylglucosamine oligosaccharide. This subunit is responsible for energy coupling to the transport system. The polypeptide is Nod factor export ATP-binding protein I (Mesorhizobium japonicum (strain LMG 29417 / CECT 9101 / MAFF 303099) (Mesorhizobium loti (strain MAFF 303099))).